The following is a 272-amino-acid chain: MAYTYMTLYMEQEKIVPVYDERGGEKDSVVLPQIFRFPVRKDLIRRAFLSEFTARLQPKGRDPMAGKRTSAVSLGVGRGVARVPRIKGSLRAALVNMARGGRAAHPPRVEKVLKEYINKKEKRLATISAISATSREDLVRQRGHRFSAETLPIVLDSSVLAKISTAREARSLLESVGVYEDVLRAKEGKRYNAGKGKMRGRRYKVPKSVLFVLEDPRSPLALAVKGMPGVDVVTPTLLSVLHLAPGGHPGRLTIYTTEALKLLSRRFEVTLP.

This sequence belongs to the universal ribosomal protein uL4 family. As to quaternary structure, part of the 50S ribosomal subunit.

Functionally, one of the primary rRNA binding proteins, this protein initially binds near the 5'-end of the 23S rRNA. It is important during the early stages of 50S assembly. It makes multiple contacts with different domains of the 23S rRNA in the assembled 50S subunit and ribosome. Forms part of the polypeptide exit tunnel. The sequence is that of Large ribosomal subunit protein uL4 from Aeropyrum pernix (strain ATCC 700893 / DSM 11879 / JCM 9820 / NBRC 100138 / K1).